Reading from the N-terminus, the 338-residue chain is Glycerol-3-phosphate dehydrogenase [NAD(P)+] (338 aa).

Positions 13, 14, and 108 each coordinate NADPH. 3 residues coordinate sn-glycerol 3-phosphate: Lys-108, Gly-139, and Ser-141. An NADPH-binding site is contributed by Ala-143. Sn-glycerol 3-phosphate is bound by residues Lys-194, Asp-247, Ser-257, Arg-258, and Asn-259. The active-site Proton acceptor is Lys-194. Arg-258 contributes to the NADPH binding site. NADPH-binding residues include Val-282 and Glu-284.

It belongs to the NAD-dependent glycerol-3-phosphate dehydrogenase family.

It is found in the cytoplasm. The enzyme catalyses sn-glycerol 3-phosphate + NAD(+) = dihydroxyacetone phosphate + NADH + H(+). It catalyses the reaction sn-glycerol 3-phosphate + NADP(+) = dihydroxyacetone phosphate + NADPH + H(+). It functions in the pathway membrane lipid metabolism; glycerophospholipid metabolism. Functionally, catalyzes the reduction of the glycolytic intermediate dihydroxyacetone phosphate (DHAP) to sn-glycerol 3-phosphate (G3P), the key precursor for phospholipid synthesis. In Streptococcus pneumoniae (strain Taiwan19F-14), this protein is Glycerol-3-phosphate dehydrogenase [NAD(P)+].